Reading from the N-terminus, the 852-residue chain is Alanine--tRNA ligase (852 aa).

Residues H554, H558, C656, and H660 each coordinate Zn(2+).

It belongs to the class-II aminoacyl-tRNA synthetase family. The cofactor is Zn(2+).

It is found in the cytoplasm. The catalysed reaction is tRNA(Ala) + L-alanine + ATP = L-alanyl-tRNA(Ala) + AMP + diphosphate. Its function is as follows. Catalyzes the attachment of alanine to tRNA(Ala) in a two-step reaction: alanine is first activated by ATP to form Ala-AMP and then transferred to the acceptor end of tRNA(Ala). Also edits incorrectly charged Ser-tRNA(Ala) and Gly-tRNA(Ala) via its editing domain. In Campylobacter curvus (strain 525.92), this protein is Alanine--tRNA ligase.